The chain runs to 158 residues: MIRIGHGFDVHKFGGEGPVIIGGVAVPYEQGLIAHSDGDVALHALSDALLGAIAAGDIGRHFPDTDDKWKGADSRELLKDVYRRVKEQGYKLGNADVTIIAQAPKMAPYIDAMREAIAHDLETDIRNINVKATTTERLGFTGRKEGIATEAVVLLIKQ.

A divalent metal cation-binding residues include Asp-9 and His-11. 4-CDP-2-C-methyl-D-erythritol 2-phosphate-binding positions include 9–11 (DVH) and 35–36 (HS). Residue His-43 coordinates a divalent metal cation. Residues 57 to 59 (DIG), 62 to 66 (FPDTD), 101 to 107 (AQAPKMA), 133 to 136 (TTTE), Phe-140, and Arg-143 each bind 4-CDP-2-C-methyl-D-erythritol 2-phosphate.

This sequence belongs to the IspF family. In terms of assembly, homotrimer. The cofactor is a divalent metal cation.

It carries out the reaction 4-CDP-2-C-methyl-D-erythritol 2-phosphate = 2-C-methyl-D-erythritol 2,4-cyclic diphosphate + CMP. It participates in isoprenoid biosynthesis; isopentenyl diphosphate biosynthesis via DXP pathway; isopentenyl diphosphate from 1-deoxy-D-xylulose 5-phosphate: step 4/6. Its function is as follows. Involved in the biosynthesis of isopentenyl diphosphate (IPP) and dimethylallyl diphosphate (DMAPP), two major building blocks of isoprenoid compounds. Catalyzes the conversion of 4-diphosphocytidyl-2-C-methyl-D-erythritol 2-phosphate (CDP-ME2P) to 2-C-methyl-D-erythritol 2,4-cyclodiphosphate (ME-CPP) with a corresponding release of cytidine 5-monophosphate (CMP). This chain is 2-C-methyl-D-erythritol 2,4-cyclodiphosphate synthase, found in Vibrio vulnificus (strain YJ016).